The chain runs to 149 residues: Large ribosomal subunit protein bL9 (149 aa).

Belongs to the bacterial ribosomal protein bL9 family.

Functionally, binds to the 23S rRNA. The chain is Large ribosomal subunit protein bL9 from Ligilactobacillus salivarius (strain UCC118) (Lactobacillus salivarius).